The following is a 354-amino-acid chain: Isocitrate dehydrogenase [NAD] regulatory subunit A, mitochondrial (354 aa).

Residues Ser-95, Asn-97, Arg-101, Arg-111, and Arg-132 each contribute to the substrate site. Residues Asp-219, Asp-243, and Asp-247 each contribute to the Mg(2+) site. NADP(+) is bound by residues 276-282 (HGTAPDI) and Asn-289.

Belongs to the isocitrate and isopropylmalate dehydrogenases family. As to quaternary structure, heterooligomer of catalytic and regulatory subunits. Requires Mg(2+) as cofactor. It depends on Mn(2+) as a cofactor.

It localises to the mitochondrion. The catalysed reaction is D-threo-isocitrate + NAD(+) = 2-oxoglutarate + CO2 + NADH. Performs an essential role in the oxidative function of the citric acid cycle. This Dictyostelium discoideum (Social amoeba) protein is Isocitrate dehydrogenase [NAD] regulatory subunit A, mitochondrial (idhA).